We begin with the raw amino-acid sequence, 120 residues long: uncharacterized protein (120 aa).

The next 2 helical transmembrane spans lie at 26–46 and 57–77; these read PSTSLTIMLSVIAIRILPAGM and LLFASFLLLSSFHYPITLTLV.

Its subcellular location is the membrane. This is an uncharacterized protein from Saccharomyces cerevisiae (strain ATCC 204508 / S288c) (Baker's yeast).